The following is a 907-amino-acid chain: NADH-quinone oxidoreductase subunit G (907 aa).

The 83-residue stretch at 1–83 (MTIIFVDNEE…GMIVSTSDKI (83 aa)) folds into the 2Fe-2S ferredoxin-type domain. 4 residues coordinate [2Fe-2S] cluster: cysteine 34, cysteine 45, cysteine 48, and cysteine 67. In terms of domain architecture, 4Fe-4S His(Cys)3-ligated-type spans 83–122 (ISRNFRKGIIELLMLNHPHDCPICEEGGSCHLQDMTVMAG). [4Fe-4S] cluster is bound by residues histidine 99, cysteine 103, cysteine 106, cysteine 112, cysteine 151, cysteine 154, cysteine 157, cysteine 201, cysteine 228, cysteine 231, cysteine 235, and cysteine 263. The 4Fe-4S Mo/W bis-MGD-type domain occupies 221 to 277 (MQYAPSICQHCCVGCNISVGEKYGKISRIENRYHNAINHYFLCDLGRFSYDYSNVDE).

Belongs to the complex I 75 kDa subunit family. Composed of 13 different subunits. Subunits NuoCD, E, F, and G constitute the peripheral sector of the complex. Requires [2Fe-2S] cluster as cofactor. The cofactor is [4Fe-4S] cluster.

It catalyses the reaction a quinone + NADH + 5 H(+)(in) = a quinol + NAD(+) + 4 H(+)(out). In terms of biological role, NDH-1 shuttles electrons from NADH, via FMN and iron-sulfur (Fe-S) centers, to quinones in the respiratory chain. Couples the redox reaction to proton translocation (for every two electrons transferred, four hydrogen ions are translocated across the cytoplasmic membrane), and thus conserves the redox energy in a proton gradient. The sequence is that of NADH-quinone oxidoreductase subunit G (nuoG) from Buchnera aphidicola subsp. Baizongia pistaciae (strain Bp).